We begin with the raw amino-acid sequence, 232 residues long: Chaperone protein LpfB (232 aa).

A signal peptide spans 1–23 (MNRSRLISCTALVLALIAQNSFA).

This sequence belongs to the periplasmic pilus chaperone family.

It localises to the periplasm. Its function is as follows. Required for the biogenesis of long polar fimbria; binds and interact with LpfA. This is Chaperone protein LpfB (lpfB) from Salmonella typhimurium (strain LT2 / SGSC1412 / ATCC 700720).